A 362-amino-acid chain; its full sequence is MAEICYEVVTDACPSSVYESTPAHSRRRPRFQTVMHEDWEKNCKRSKQEALATRYSSIPRSSREDFSDQNVDVSSPRYGVSSVCGRRREMEDAVAIHPSFSSPKNSEFPQHYFGVYDGHGCSHVAARCRERLHKLVQEELSSDMEDEEEWKTTMERSFTRMDKEVVSWGDSVVTANCKCDLQTPACDSVGSTAVVSVITPDKIVVANCGDSRAVLCRNGKPVPLSTDHKPDRPDELDRIEGAGGRVIYWDCPRVLGVLAMSRAIGDNYLKPYVSCEPEVTITDRRDDDCLILASDGLWDVVSNETACSVARMCLRGGGRRQDNEDPAISDKACTEASVLLTKLALARNSSDNVSVVVIDLRR.

In terms of domain architecture, PPM-type phosphatase spans 77-360 (RYGVSSVCGR…DNVSVVVIDL (284 aa)). Residues D117, G118, D295, and D351 each contribute to the Mn(2+) site.

This sequence belongs to the PP2C family. Mg(2+) serves as cofactor. Requires Mn(2+) as cofactor.

The enzyme catalyses O-phospho-L-seryl-[protein] + H2O = L-seryl-[protein] + phosphate. The catalysed reaction is O-phospho-L-threonyl-[protein] + H2O = L-threonyl-[protein] + phosphate. In Arabidopsis thaliana (Mouse-ear cress), this protein is Probable protein phosphatase 2C 24.